Reading from the N-terminus, the 246-residue chain is Transcriptional regulatory protein LytR (246 aa).

The Response regulatory domain maps to 2-116; it reads KALIIDDEPL…RIEQAVNKVR (115 aa). The residue at position 53 (Asp53) is a 4-aspartylphosphate. Residues 141 to 245 enclose the HTH LytTR-type domain; sequence LPVEIDDKIH…MKDFKASIGL (105 aa).

In terms of assembly, homodimer; when phosphorylated. In terms of processing, phosphorylated and dephosphorylated by LytS.

Its subcellular location is the cytoplasm. Member of the two-component regulatory system LytR/LytS that regulates genes involved in autolysis, programmed cell death, biofilm formation and cell wall metabolism. Also participates in sensing and responding to host defense cationic antimicrobial peptides (HDPs). Upon phosphorylation by LytS, functions as a transcription regulator by direct binding to promoter regions of target genes including lrgA and lrgB, to positively regulate their expression. The protein is Transcriptional regulatory protein LytR (lytR) of Staphylococcus aureus (strain bovine RF122 / ET3-1).